The sequence spans 377 residues: Polar flagellin F (377 aa).

2 coiled-coil regions span residues 98-131 (QSANGSNSQVERTALQEEVTALNDELNRIAETTS) and 302-339 (DSQRAELGAYQNRFNHAINNLDNIHENLAASNSRIQDT).

This sequence belongs to the bacterial flagellin family. Heteromer of multiple flagellin subunits including FlaA, FlaB/D, FlaC, FlaE and FlaF.

It is found in the secreted. It localises to the bacterial flagellum. Flagellin is the subunit protein which polymerizes to form the filaments of bacterial flagella. In Vibrio parahaemolyticus serotype O3:K6 (strain RIMD 2210633), this protein is Polar flagellin F (flaF).